We begin with the raw amino-acid sequence, 728 residues long: Catalase-peroxidase (728 aa).

A cross-link (tryptophyl-tyrosyl-methioninium (Trp-Tyr) (with M-244)) is located at residues 91 to 218; that stretch reads WHSAGTYRIA…LAAVQMGLIY (128 aa). H92 (proton acceptor) is an active-site residue. A cross-link (tryptophyl-tyrosyl-methioninium (Tyr-Met) (with W-91)) is located at residues 218–244; that stretch reads YVNPEGPDGNPDPVAAARDIRETFARM. H259 contacts heme b.

The protein belongs to the peroxidase family. Peroxidase/catalase subfamily. As to quaternary structure, homodimer or homotetramer. Requires heme b as cofactor. Formation of the three residue Trp-Tyr-Met cross-link is important for the catalase, but not the peroxidase activity of the enzyme.

It carries out the reaction H2O2 + AH2 = A + 2 H2O. It catalyses the reaction 2 H2O2 = O2 + 2 H2O. Bifunctional enzyme with both catalase and broad-spectrum peroxidase activity. This Burkholderia multivorans (strain ATCC 17616 / 249) protein is Catalase-peroxidase.